The sequence spans 334 residues: HTH-type transcriptional repressor PurR (334 aa).

Residues 2 to 56 form the HTH lacI-type domain; it reads ATIKDVAKMAGVSTTTVSHVINKTRFVAAETEKLVLQAIQELNYSPSAVARSLKV. A DNA-binding region (H-T-H motif) is located at residues 4-23; the sequence is IKDVAKMAGVSTTTVSHVIN. A DNA-binding region spans residues 48-56; the sequence is SAVARSLKV. 5 residues coordinate hypoxanthine: Tyr73, Lys189, Thr191, Phe220, and Asp274.

Homodimer.

It participates in purine metabolism; purine nucleotide biosynthesis [regulation]. Functionally, is the main repressor of the genes involved in the de novo synthesis of purine nucleotides, regulating purB, purC, purEK, purF, purHD, purL, purMN and guaBA expression. PurR is allosterically activated to bind its cognate DNA by binding the purine corepressors, hypoxanthine or guanine, thereby effecting transcription repression. This is HTH-type transcriptional repressor PurR from Pasteurella multocida (strain Pm70).